We begin with the raw amino-acid sequence, 281 residues long: Diaminopimelate epimerase (281 aa).

Residues N14 and N65 each contribute to the substrate site. Residue C74 is the Proton donor of the active site. Substrate-binding positions include 75-76 (GN), N165, N198, and 216-217 (ER). Catalysis depends on C225, which acts as the Proton acceptor. Position 226 to 227 (226 to 227 (GT)) interacts with substrate.

The protein belongs to the diaminopimelate epimerase family. As to quaternary structure, homodimer.

The protein localises to the cytoplasm. The enzyme catalyses (2S,6S)-2,6-diaminopimelate = meso-2,6-diaminopimelate. It participates in amino-acid biosynthesis; L-lysine biosynthesis via DAP pathway; DL-2,6-diaminopimelate from LL-2,6-diaminopimelate: step 1/1. Functionally, catalyzes the stereoinversion of LL-2,6-diaminopimelate (L,L-DAP) to meso-diaminopimelate (meso-DAP), a precursor of L-lysine and an essential component of the bacterial peptidoglycan. This Leptospira borgpetersenii serovar Hardjo-bovis (strain JB197) protein is Diaminopimelate epimerase.